The sequence spans 1099 residues: Carbamoyl phosphate synthase large chain (1099 aa).

The tract at residues Met-1–Glu-402 is carboxyphosphate synthetic domain. The ATP site is built by Arg-129, Arg-169, Gly-175, Gly-176, Glu-208, Val-210, Glu-215, Gly-241, Ile-242, His-243, Gln-285, and Glu-299. The ATP-grasp 1 domain occupies Lys-133–Val-328. Gln-285, Glu-299, and Asn-301 together coordinate Mg(2+). Residues Gln-285, Glu-299, and Asn-301 each contribute to the Mn(2+) site. The oligomerization domain stretch occupies residues Leu-403 to Ala-541. The tract at residues Val-542 to Gly-944 is carbamoyl phosphate synthetic domain. The 192-residue stretch at Ala-666–Val-857 folds into the ATP-grasp 2 domain. ATP-binding residues include Arg-702, Lys-741, Leu-743, Glu-748, Gly-773, Val-774, His-775, Ser-776, Gln-816, and Glu-828. Residues Gln-816, Glu-828, and Asn-830 each coordinate Mg(2+). Mn(2+) contacts are provided by Gln-816, Glu-828, and Asn-830. The region spanning Asn-945–Met-1099 is the MGS-like domain. An allosteric domain region spans residues Asn-945 to Met-1099.

This sequence belongs to the CarB family. Composed of two chains; the small (or glutamine) chain promotes the hydrolysis of glutamine to ammonia, which is used by the large (or ammonia) chain to synthesize carbamoyl phosphate. Tetramer of heterodimers (alpha,beta)4. Mg(2+) is required as a cofactor. The cofactor is Mn(2+).

It carries out the reaction hydrogencarbonate + L-glutamine + 2 ATP + H2O = carbamoyl phosphate + L-glutamate + 2 ADP + phosphate + 2 H(+). It catalyses the reaction hydrogencarbonate + NH4(+) + 2 ATP = carbamoyl phosphate + 2 ADP + phosphate + 2 H(+). Its pathway is amino-acid biosynthesis; L-arginine biosynthesis; carbamoyl phosphate from bicarbonate: step 1/1. It participates in pyrimidine metabolism; UMP biosynthesis via de novo pathway; (S)-dihydroorotate from bicarbonate: step 1/3. Large subunit of the glutamine-dependent carbamoyl phosphate synthetase (CPSase). CPSase catalyzes the formation of carbamoyl phosphate from the ammonia moiety of glutamine, carbonate, and phosphate donated by ATP, constituting the first step of 2 biosynthetic pathways, one leading to arginine and/or urea and the other to pyrimidine nucleotides. The large subunit (synthetase) binds the substrates ammonia (free or transferred from glutamine from the small subunit), hydrogencarbonate and ATP and carries out an ATP-coupled ligase reaction, activating hydrogencarbonate by forming carboxy phosphate which reacts with ammonia to form carbamoyl phosphate. This is Carbamoyl phosphate synthase large chain from Thermotoga petrophila (strain ATCC BAA-488 / DSM 13995 / JCM 10881 / RKU-1).